Here is an 86-residue protein sequence, read N- to C-terminus: uncharacterized protein (86 aa).

3 helical membrane passes run 4–24 (ILII…IAAV), 34–54 (MGLV…ILIN), and 64–84 (DIAY…ARVL).

The protein to M.jannaschii MJ1223.

Its subcellular location is the cell membrane. This is an uncharacterized protein from Methanothermobacter thermautotrophicus (strain ATCC 29096 / DSM 1053 / JCM 10044 / NBRC 100330 / Delta H) (Methanobacterium thermoautotrophicum).